We begin with the raw amino-acid sequence, 233 residues long: Octanoyltransferase (233 aa).

Residues 36-211 enclose the BPL/LPL catalytic domain; it reads DTTPDEIWLV…EFTRQLGYPT (176 aa). Residues 75–82, 142–144, and 155–157 each bind substrate; these read RGGQVTYH, SLG, and GLA. Residue C173 is the Acyl-thioester intermediate of the active site.

The protein belongs to the LipB family.

The protein localises to the cytoplasm. The catalysed reaction is octanoyl-[ACP] + L-lysyl-[protein] = N(6)-octanoyl-L-lysyl-[protein] + holo-[ACP] + H(+). The protein operates within protein modification; protein lipoylation via endogenous pathway; protein N(6)-(lipoyl)lysine from octanoyl-[acyl-carrier-protein]: step 1/2. In terms of biological role, catalyzes the transfer of endogenously produced octanoic acid from octanoyl-acyl-carrier-protein onto the lipoyl domains of lipoate-dependent enzymes. Lipoyl-ACP can also act as a substrate although octanoyl-ACP is likely to be the physiological substrate. In Yersinia pseudotuberculosis serotype O:3 (strain YPIII), this protein is Octanoyltransferase.